The primary structure comprises 1000 residues: C2 domain-containing protein 5 (1000 aa).

The 109-residue stretch at 1–109 (MPGKLKVKIV…EAATVISGWF (109 aa)) folds into the C2 domain. The Ca(2+) site is built by Asp19, Asp26, Asp76, Asp78, Ser81, and Asp84. At Ser197 the chain carries Phosphoserine; by PKB/AKT2. Ser200 and Ser260 each carry phosphoserine. The tract at residues 265–330 (MKEIPFNEDP…SGSAGKEGGP (66 aa)) is disordered. Over residues 274-289 (PNPNTHSSGPSTPLKN) the composition is skewed to polar residues. A compositionally biased stretch (low complexity) spans 290–318 (QTYSFSPSKSYSRQSSSSDTDLSLTPKTG). A phosphoserine mark is found at Ser293, Ser295, Ser304, Ser305, and Ser306. Thr317 bears the Phosphothreonine mark. Residues 319 to 328 (MGSGSAGKEG) are compositionally biased toward gly residues. Ser323 carries the phosphoserine modification. Thr601 bears the Phosphothreonine mark. The disordered stretch occupies residues 639-669 (EIIGSPIPEPRQRSRLLRSQSESSDEVTELD). Ser643, Ser657, Ser659, Ser661, and Ser662 each carry phosphoserine. Thr666 carries the phosphothreonine modification. Residue Ser671 is modified to Phosphoserine. At Thr807 the chain carries Phosphothreonine. Ser817 and Ser852 each carry phosphoserine.

Ca(2+) serves as cofactor. Post-translationally, phosphorylated on Ser-197 by active myristoylated kinase AKT2; insulin-stimulated phosphorylation by AKT2 regulates SLC2A4/GLUT4 translocation into the plasma membrane.

Its subcellular location is the cytoplasmic vesicle membrane. It localises to the cytoplasm. It is found in the cell cortex. The protein resides in the cell membrane. The protein localises to the cell projection. Its subcellular location is the ruffle. Functionally, required for insulin-stimulated glucose transport and glucose transporter SLC2A4/GLUT4 translocation from intracellular glucose storage vesicle (GSV) to the plasma membrane (PM) in adipocytes. Binds phospholipid membranes in a calcium-dependent manner and is necessary for the optimal membrane fusion between SLC2A4/GLUT4 GSV and the PM. This chain is C2 domain-containing protein 5 (C2CD5), found in Homo sapiens (Human).